The primary structure comprises 115 residues: NAD(P)H-quinone oxidoreductase subunit M (115 aa).

This sequence belongs to the complex I NdhM subunit family. NDH-1 can be composed of about 15 different subunits; different subcomplexes with different compositions have been identified which probably have different functions.

It is found in the cellular thylakoid membrane. The enzyme catalyses a plastoquinone + NADH + (n+1) H(+)(in) = a plastoquinol + NAD(+) + n H(+)(out). It catalyses the reaction a plastoquinone + NADPH + (n+1) H(+)(in) = a plastoquinol + NADP(+) + n H(+)(out). In terms of biological role, NDH-1 shuttles electrons from an unknown electron donor, via FMN and iron-sulfur (Fe-S) centers, to quinones in the respiratory and/or the photosynthetic chain. The immediate electron acceptor for the enzyme in this species is believed to be plastoquinone. Couples the redox reaction to proton translocation, and thus conserves the redox energy in a proton gradient. Cyanobacterial NDH-1 also plays a role in inorganic carbon-concentration. This chain is NAD(P)H-quinone oxidoreductase subunit M, found in Synechococcus sp. (strain CC9605).